The primary structure comprises 458 residues: Cytoplasmic tRNA 2-thiolation protein 2 (458 aa).

This sequence belongs to the CTU2/NCS2 family.

The protein resides in the cytoplasm. It participates in tRNA modification; 5-methoxycarbonylmethyl-2-thiouridine-tRNA biosynthesis. Plays a central role in 2-thiolation of mcm(5)S(2)U at tRNA wobble positions of tRNA(Lys), tRNA(Glu) and tRNA(Gln). May act by forming a heterodimer with NCS6/CTU1 that ligates sulfur from thiocarboxylated URM1 onto the uridine of tRNAs at wobble position. The protein is Cytoplasmic tRNA 2-thiolation protein 2 of Arabidopsis thaliana (Mouse-ear cress).